Consider the following 1284-residue polypeptide: Collagen alpha-1(XX) chain (1284 aa).

Positions 1-22 (MSSGDPAHLGLCLWLWLGATLG) are cleaved as a signal peptide. The region spanning 28–119 (ASGLLRLAVL…EFVIEDLKSS (92 aa)) is the Fibronectin type-III 1 domain. Residues 122-171 (DRSSQRPLGSGAPEPTPSHTGSPDPEQASEPQVAFTPSQDPRTPAGPQFR) form a disordered region. In terms of domain architecture, VWFA spans 179–354 (DMVFLVDGSW…GALAGLLSRL (176 aa)). 5 Fibronectin type-III domains span residues 379–468 (APTS…APLP), 469–559 (PPRA…TLAP), 560–647 (PRHL…TKKA), 649–738 (SPSQ…TPST), and 743–833 (PPSN…ACPA). N-linked (GlcNAc...) asparagine glycosylation occurs at N607. In terms of domain architecture, Laminin G-like spans 842-1037 (GFDLMVAFSL…LQMLQIVCSD (196 aa)). Disordered regions lie at residues 1065-1190 (SCSS…EKGE) and 1212-1284 (SFHE…GLWE). Residues 1071–1082 (PGPPGPQGPPGL) are compositionally biased toward pro residues. Collagen-like domains follow at residues 1071 to 1127 (PGPP…IPGR) and 1133 to 1190 (PKGM…EKGE). 2 stretches are compositionally biased toward low complexity: residues 1112–1125 (LPGL…QGIP) and 1166–1181 (ERGP…LPGP). Residues 1271–1284 (SPGQQGASTQGLWE) are compositionally biased toward polar residues.

High expression in heart, lung, liver, skeletal muscle, kidney, pancreas, spleen, testis, ovary, subthalamic nucleus and fetal liver. Weak expression in other tissues tested.

It is found in the secreted. It localises to the extracellular space. Functionally, probable collagen protein. The protein is Collagen alpha-1(XX) chain (COL20A1) of Homo sapiens (Human).